A 311-amino-acid chain; its full sequence is 4-diphosphocytidyl-2-C-methyl-D-erythritol kinase (311 aa).

Lys-9 is a catalytic residue. Position 95–105 (95–105) interacts with ATP; sequence PLGAGLAGGST. The active site involves Asp-137.

This sequence belongs to the GHMP kinase family. IspE subfamily.

The enzyme catalyses 4-CDP-2-C-methyl-D-erythritol + ATP = 4-CDP-2-C-methyl-D-erythritol 2-phosphate + ADP + H(+). It functions in the pathway isoprenoid biosynthesis; isopentenyl diphosphate biosynthesis via DXP pathway; isopentenyl diphosphate from 1-deoxy-D-xylulose 5-phosphate: step 3/6. Catalyzes the phosphorylation of the position 2 hydroxy group of 4-diphosphocytidyl-2C-methyl-D-erythritol. The protein is 4-diphosphocytidyl-2-C-methyl-D-erythritol kinase of Thermosynechococcus vestitus (strain NIES-2133 / IAM M-273 / BP-1).